Here is a 292-residue protein sequence, read N- to C-terminus: Glycine--tRNA ligase alpha subunit (292 aa).

Belongs to the class-II aminoacyl-tRNA synthetase family. Tetramer of two alpha and two beta subunits.

The protein localises to the cytoplasm. It catalyses the reaction tRNA(Gly) + glycine + ATP = glycyl-tRNA(Gly) + AMP + diphosphate. The protein is Glycine--tRNA ligase alpha subunit of Pelobacter propionicus (strain DSM 2379 / NBRC 103807 / OttBd1).